Here is a 323-residue protein sequence, read N- to C-terminus: Viral cathepsin (323 aa).

Residues 1 to 16 form the signal peptide; it reads MNKILFYLFVYGVVNS. Positions 17–112 are cleaved as a propeptide — activation peptide; that stretch reads AAYDLLKAPN…IVLDQPPGKG (96 aa). 3 cysteine pairs are disulfide-bonded: Cys133–Cys174, Cys167–Cys207, and Cys262–Cys310. Residue Cys136 is part of the active site. The N-linked (GlcNAc...) asparagine; by host glycan is linked to Asn158. Catalysis depends on residues His269 and Asn289.

Belongs to the peptidase C1 family. In terms of assembly, interacts with chitinase/CHIA; this interaction maintains VCATH in the host endoplasmic reticulum. In terms of processing, synthesized as an inactive proenzyme and activated by proteolytic removal of the inhibitory propeptide.

It localises to the host endoplasmic reticulum. The enzyme catalyses Endopeptidase of broad specificity, hydrolyzing substrates of both cathepsin L and cathepsin B.. In terms of biological role, cysteine protease that plays an essential role in host liquefaction to facilitate horizontal transmission of the virus. Accumulates within infected cells as an inactive proenzyme (proV-CATH), which is activated by proteolytic cleavage upon cell death. The sequence is that of Viral cathepsin (VCATH) from Lepidoptera (butterflies and moths).